A 393-amino-acid chain; its full sequence is Phosphoglycerate kinase (393 aa).

Substrate contacts are provided by residues 21-23 (DLN), R37, 60-63 (HLGR), R115, and R148. Residues K199, E321, and 347–350 (GGDT) contribute to the ATP site.

The protein belongs to the phosphoglycerate kinase family. Monomer.

The protein localises to the cytoplasm. It catalyses the reaction (2R)-3-phosphoglycerate + ATP = (2R)-3-phospho-glyceroyl phosphate + ADP. Its pathway is carbohydrate degradation; glycolysis; pyruvate from D-glyceraldehyde 3-phosphate: step 2/5. This chain is Phosphoglycerate kinase, found in Dechloromonas aromatica (strain RCB).